The sequence spans 284 residues: Spermidine synthase (284 aa).

The 236-residue stretch at Asn-6–Leu-241 folds into the PABS domain. S-adenosyl 3-(methylsulfanyl)propylamine is bound at residue Gln-37. Tyr-67 contacts putrescine. Residues Gln-68, Asp-92, Glu-112, Asp-143–Gly-144, and Asp-161 contribute to the S-adenosyl 3-(methylsulfanyl)propylamine site. Asp-161 (proton acceptor) is an active-site residue. Putrescine-binding positions include Asp-161–Asp-164 and Tyr-229.

The protein belongs to the spermidine/spermine synthase family.

The enzyme catalyses S-adenosyl 3-(methylsulfanyl)propylamine + putrescine = S-methyl-5'-thioadenosine + spermidine + H(+). Its pathway is amine and polyamine biosynthesis; spermidine biosynthesis; spermidine from putrescine: step 1/1. Functionally, catalyzes the production of spermidine from putrescine and decarboxylated S-adenosylmethionine (dcSAM). Has a strong preference for putrescine as substrate. The chain is Spermidine synthase (spsA) from Dictyostelium discoideum (Social amoeba).